A 1242-amino-acid chain; its full sequence is ATP-dependent helicase/nuclease subunit A (1242 aa).

Positions 12–487 (SRWTDEQWKA…IDLASNFRSR (476 aa)) constitute a UvrD-like helicase ATP-binding domain. An ATP-binding site is contributed by 33–40 (AAAGSGKT). Residues 514–808 (AAQLKYGADY…RIMTIHSSKG (295 aa)) form the UvrD-like helicase C-terminal domain.

The protein belongs to the helicase family. AddA subfamily. As to quaternary structure, heterodimer of AddA and AddB/RexB. The cofactor is Mg(2+).

It catalyses the reaction Couples ATP hydrolysis with the unwinding of duplex DNA by translocating in the 3'-5' direction.. It carries out the reaction ATP + H2O = ADP + phosphate + H(+). Functionally, the heterodimer acts as both an ATP-dependent DNA helicase and an ATP-dependent, dual-direction single-stranded exonuclease. Recognizes the chi site generating a DNA molecule suitable for the initiation of homologous recombination. The AddA nuclease domain is required for chi fragment generation; this subunit has the helicase and 3' -&gt; 5' nuclease activities. This chain is ATP-dependent helicase/nuclease subunit A, found in Geobacillus kaustophilus (strain HTA426).